The chain runs to 201 residues: CASP-like protein 2B2 (201 aa).

At 1–28 the chain is on the cytoplasmic side; the sequence is MSYLGVGVSPGNVTGSSTKMKLIDRKVR. A helical membrane pass occupies residues 29-49; sequence VTELILRSLVCAFALVAAILV. Residues 50–71 lie on the Extracellular side of the membrane; it reads ATDVQVREIFTIQKKAKFTDMK. Residues 72–92 traverse the membrane as a helical segment; the sequence is ALVFLVVINGIAAGYSLVQAV. The Cytoplasmic portion of the chain corresponds to 93-108; that stretch reads CCLVGLMKGSVLLSEP. A helical membrane pass occupies residues 109–129; sequence LAWAIFFGDQAVAYLCVAGVA. At 130 to 166 the chain is on the extracellular side; that stretch reads AAAQSAAFAKLGQPELQWMKICDMYGKFCNQVGEGIA. A helical membrane pass occupies residues 167-187; it reads SALFACIGMVLISCISAFGVF. Residues 188-201 lie on the Cytoplasmic side of the membrane; that stretch reads RLYGGSKPRQSSRW.

It belongs to the Casparian strip membrane proteins (CASP) family. Homodimer and heterodimers.

It localises to the cell membrane. The chain is CASP-like protein 2B2 from Arabidopsis lyrata subsp. lyrata (Lyre-leaved rock-cress).